Here is an 841-residue protein sequence, read N- to C-terminus: Nuclear RNA export factor 2 (841 aa).

The interval 1–285 (MPNQMRVLDF…NFELVDGKPF (285 aa)) is RNA-binding unit probably involved in Piwi-dependent recruitment and single-stranded RNA-PPNP complex formation. LRR repeat units follow at residues 200–221 (RLNG…TLLA), 224–245 (DYAL…CRAL), and 249–270 (RARE…PANI). The tract at residues 286–553 (NMLHKIFSPL…EYVRAVKEVF (268 aa)) is necessary for silencing function. The region spanning 325–408 (WHAFMIPDPS…IFRYYLRMNV (84 aa)) is the RRM domain. LRR repeat units follow at residues 475–496 (TCSE…HVLG), 500–521 (CLRA…HSLG), and 524–545 (PLKS…PSEY). One can recognise an NTF2 domain in the interval 585–758 (LVGAFLENYL…LKIANERLHI (174 aa)). The 54-residue stretch at 788-841 (DVKDHKLLLFQEVTGLISTWVTSIVEEADWDFERALKLFIQKNADHEIPDLAFA) folds into the TAP-C domain.

It belongs to the NXF family. In terms of assembly, in the ovaries, part of a complex composed of at least Panx, nxf2, piwi and Nxt1. The complex is knowns as Panx-induced cotranscriptional silencing (PICTS) complex, Panx-nxf2-dependent TAP/p15 silencing (Pandas complex), SFiNX (silencing factor interacting nuclear export variant) or piwi-Panx-nxf2-p15 (PPNP) complex. Interacts (via TAP-C domain) with Panx (via NIR region); the interaction is direct. Interacts (via NTF2 domain) with Nxt1; the interaction is direct and prevents Nxt1 binding to nucleoporins. Interacts with sbr/Nxf1. Expressed in female gonads (at protein level). Expressed ubiquitously.

Its subcellular location is the cytoplasm. The protein localises to the nucleus. It localises to the nucleoplasm. Its function is as follows. May be involved in the export of mRNA from the nucleus to the cytoplasm. In the ovaries, forms a complex with nxf2, piwi and Nxt1 which acts as effectors of cotranscriptional transposon silencing. On recruitment to a target transcript, interacts with single stranded RNA, thereby anchoring the complex via the nascent target transcript to chromatin and allowing Panx to recruit silencing effectors to establishing repressive heterochromatin at transposon loci. Does not affect piRNA biogenesis. The interaction with Panx stabilizes the nuclear protein complex. Does not bind nucleoporins, but regulates sbr/Nxf1 binding to nucleoporins and, indirectly, transposon exports. In Drosophila melanogaster (Fruit fly), this protein is Nuclear RNA export factor 2 (nxf2).